We begin with the raw amino-acid sequence, 581 residues long: Spastin (581 aa).

The segment covering 1 to 12 has biased composition (basic residues); sequence MSSPAGRRKKKG. The disordered stretch occupies residues 1 to 39; the sequence is MSSPAGRRKKKGSGGASPAPARPPPPAAVPAPAAGPAPA. The segment at 1-48 is required for nuclear localization; that stretch reads MSSPAGRRKKKGSGGASPAPARPPPPAAVPAPAAGPAPAPGSPHKRNL. The Cytoplasmic portion of the chain corresponds to 1–54; the sequence is MSSPAGRRKKKGSGGASPAPARPPPPAAVPAPAAGPAPAPGSPHKRNLYYFSYP. Residues 1-78 form a required for interaction with ATL1 region; sequence MSSPAGRRKK…LGLLFVWLCQ (78 aa). Residues 1–191 form a required for midbody localization region; it reads MSSPAGRRKK…LVMAKDRLQL (191 aa). The interval 1-265 is required for interaction with RTN1; sequence MSSPAGRRKK…GTSKPNRTNK (265 aa). Positions 4-11 match the Nuclear localization signal motif; it reads PAGRRKKK. The span at 20–39 shows a compositional bias: pro residues; sequence PARPPPPAAVPAPAAGPAPA. Residues 48–85 are required for interaction with SSNA1 and microtubules; the sequence is LYYFSYPLVVGFALLRLLACHLGLLFVWLCQRFSRALM. The helical intramembrane region spans 55 to 75; it reads LVVGFALLRLLACHLGLLFVW. The Nuclear export signal signature appears at 57 to 65; the sequence is VGFALLRLL. Topologically, residues 76 to 581 are cytoplasmic; it reads LCQRFSRALM…WNKDFGDTTV (506 aa). Positions 90–111 are disordered; it reads SSGTAPAPASPSTPAPGPGGEA. Positions 97 to 106 are enriched in pro residues; it reads PASPSTPAPG. The MIT domain maps to 118–192; sequence HKQAFEYISI…VMAKDRLQLL (75 aa). A sufficient for microtubule severing region spans residues 193–581; that stretch reads ESGAVPKKKD…WNKDFGDTTV (389 aa). Residues 195-277 form a disordered region; that stretch reads GAVPKKKDPL…TPTTAVRKKK (83 aa). Residues 206-225 are compositionally biased toward polar residues; sequence HASNSLPRSKTVMKSGSTGL. 2 positions are modified to phosphoserine: Ser-210 and Ser-233. The segment at 235–293 is required for interaction with microtubules and microtubule severing; that stretch reads SGLSMVSGARPGSGPAATTHKGTSKPNRTNKPSTPTTAVRKKKDLKNFRNVDSNLANLI. Residues 254–271 show a composition bias toward polar residues; it reads HKGTSKPNRTNKPSTPTT. A Phosphothreonine modification is found at Thr-271. Residues 274-277 carry the Nuclear localization signal motif; sequence RKKK. 347–354 is an ATP binding site; that stretch reads GPPGNGKT. Ser-562 is subject to Phosphoserine.

The protein belongs to the AAA ATPase family. Spastin subfamily. In terms of assembly, homohexamer. Mostly monomeric, but assembles into hexameric structure for short periods of time. Oligomerization seems to be a prerequisite for catalytic activity. Binding to ATP in a cleft between two adjacent subunits stabilizes the homohexameric form. Binds to microtubules at least in part via the alpha-tubulin and beta-tubulin tails. The hexamer adopts a ring conformation through which microtubules pass prior to being severed. Does not interact strongly with tubulin heterodimers. Interacts (via MIT domain) with CHMP1B; the interaction is direct. Interacts with SSNA1. Interacts with ATL1. Interacts with RTN1. Interacts with ZFYVE27. Interacts with REEP1. Interacts (via MIT domain) with IST1.

The protein localises to the membrane. It localises to the endoplasmic reticulum. It is found in the midbody. Its subcellular location is the cytoplasm. The protein resides in the cytoskeleton. The protein localises to the microtubule organizing center. It localises to the centrosome. It is found in the perinuclear region. Its subcellular location is the nucleus. The protein resides in the spindle. The protein localises to the cell projection. It localises to the axon. The enzyme catalyses n ATP + n H2O + a microtubule = n ADP + n phosphate + (n+1) alpha/beta tubulin heterodimers.. With respect to regulation, allosteric enzyme with a cooperative mechanism; at least two neighbor subunits influence each other strongly in spastin hexamers. Microtubule binding promotes cooperative interactions among spastin subunits. ATP-dependent microtubule severing protein that specifically recognizes and cuts microtubules that are polyglutamylated. Preferentially recognizes and acts on microtubules decorated with short polyglutamate tails: severing activity increases as the number of glutamates per tubulin rises from one to eight, but decreases beyond this glutamylation threshold. Severing activity is not dependent on tubulin acetylation or detyrosination. Microtubule severing promotes reorganization of cellular microtubule arrays and the release of microtubules from the centrosome following nucleation. It is critical for the biogenesis and maintenance of complex microtubule arrays in axons, spindles and cilia. SPAST is involved in abscission step of cytokinesis and nuclear envelope reassembly during anaphase in cooperation with the ESCRT-III complex. Recruited at the midbody, probably by IST1, and participates in membrane fission during abscission together with the ESCRT-III complex. Recruited to the nuclear membrane by IST1 and mediates microtubule severing, promoting nuclear envelope sealing and mitotic spindle disassembly during late anaphase. Required for membrane traffic from the endoplasmic reticulum (ER) to the Golgi and endosome recycling. Recruited by IST1 to endosomes and regulates early endosomal tubulation and recycling by mediating microtubule severing. Probably plays a role in axon growth and the formation of axonal branches. This Rattus norvegicus (Rat) protein is Spastin.